The following is a 487-amino-acid chain: MGSLSSSDYSKKPHAVCIPYPAQGHINPMLKLAKLLHYKGFHITFVNTEFNHKRLLKSRGSDSLKGLHSFQFKTIPDGLPPSDVDATQDIPSLCESTTTHCLVPFKQLLQKLNDTSSSEVPPVSCVVSDAVMSFTISAAQELDIPEVLFWTPSACGVLGYMHYAQLIDKGLTPLKDASYFSNGFLDQVLDWIPGMEGIRLRDLPTFLRTTNPDEYMIKFILQETERSKKASAIVLNTFQELESEVIDSLSTLLPPIYPIGPLQILQNQVDDESLKVLGSNLWKEEPECLEWLDTKDPNSVVYVNFGSITVMTNDQLIEFAWGLANSKQNFLWIIRPDLISGESSILGEEFVEETKERGLIASWCHQEQVINHPAIGGFLTHNGWNSTIESISSGVPMICWPFFAEQQTNCRFCCNKWGIGMEINSDVKRDEVESLVKELMVGEKGKEMKKKALEWKNIAEVTTTKPDGSSYSNLEKLIKVLKSKPSH.

Histidine 25 serves as the catalytic Proton acceptor. Residue histidine 25 participates in an anthocyanidin binding. Aspartate 129 acts as the Charge relay in catalysis. Positions 151, 366, 381, 384, 385, 386, and 389 each coordinate UDP-alpha-D-glucose. An anthocyanidin is bound at residue alanine 404. Residues glutamate 405 and glutamine 406 each coordinate UDP-alpha-D-glucose.

Belongs to the UDP-glycosyltransferase family. In terms of tissue distribution, expressed in roots.

The enzyme catalyses 7-deoxyloganetin + UDP-alpha-D-glucose = 7-deoxyloganin + UDP + H(+). Its function is as follows. Iridoid glucosyltransferase acting exclusively on 7-deoxyloganetin. No activity with 7-deoxyloganetic acid. The chain is 7-deoxyloganetin glucosyltransferase (UGT85A23) from Catharanthus roseus (Madagascar periwinkle).